Here is a 320-residue protein sequence, read N- to C-terminus: Adhesin MafA 1 (320 aa).

Positions 1–18 (MQARLLIPILFSVFILSA) are cleaved as a signal peptide. A lipid anchor (N-palmitoyl cysteine) is attached at Cys-19. Cys-19 carries the S-diacylglycerol cysteine lipid modification. Residues 288–320 (HMGNSAPSVEADNSHEGYGYSDEAVRRHRQGQP) form a disordered region.

The protein belongs to the MafA family.

It is found in the cell outer membrane. The protein is Adhesin MafA 1 (mafA1) of Neisseria meningitidis serogroup A / serotype 4A (strain DSM 15465 / Z2491).